We begin with the raw amino-acid sequence, 178 residues long: Large ribosomal subunit protein uL6 (178 aa).

The protein belongs to the universal ribosomal protein uL6 family. Part of the 50S ribosomal subunit.

This protein binds to the 23S rRNA, and is important in its secondary structure. It is located near the subunit interface in the base of the L7/L12 stalk, and near the tRNA binding site of the peptidyltransferase center. The chain is Large ribosomal subunit protein uL6 from Streptococcus equi subsp. zooepidemicus (strain H70).